We begin with the raw amino-acid sequence, 464 residues long: Arginine biosynthesis bifunctional protein ArgJ, chloroplastic (464 aa).

Residues Thr-208, Lys-234, Thr-245, Glu-332, Asn-459, and Thr-464 each contribute to the substrate site. Thr-245 functions as the Nucleophile in the catalytic mechanism.

The protein belongs to the ArgJ family. In terms of assembly, heterodimer of an alpha and a beta chain.

It localises to the plastid. Its subcellular location is the chloroplast. The catalysed reaction is N(2)-acetyl-L-ornithine + L-glutamate = N-acetyl-L-glutamate + L-ornithine. It catalyses the reaction L-glutamate + acetyl-CoA = N-acetyl-L-glutamate + CoA + H(+). It functions in the pathway amino-acid biosynthesis; L-arginine biosynthesis; L-ornithine and N-acetyl-L-glutamate from L-glutamate and N(2)-acetyl-L-ornithine (cyclic): step 1/1. It participates in amino-acid biosynthesis; L-arginine biosynthesis; N(2)-acetyl-L-ornithine from L-glutamate: step 1/4. Catalyzes two activities which are involved in the cyclic version of arginine biosynthesis: the synthesis of acetylglutamate from glutamate and acetyl-CoA, and of ornithine by transacetylation between acetylornithine and glutamate. The polypeptide is Arginine biosynthesis bifunctional protein ArgJ, chloroplastic (Zea mays (Maize)).